A 155-amino-acid polypeptide reads, in one-letter code: Vasotocin-neurophysin VT 2 (155 aa).

Residues 1–20 (MSVCAVLLLCVAGLLCLSSA) form the signal peptide. Residues Cys-21 and Cys-26 are joined by a disulfide bond. Gly-29 is modified (glycine amide). 7 disulfide bridges follow: Cys-42-Cys-86, Cys-45-Cys-59, Cys-53-Cys-76, Cys-60-Cys-66, Cys-93-Cys-106, Cys-100-Cys-118, and Cys-107-Cys-112. The segment covering 119-128 (SEDSESEEPA) has biased composition (acidic residues). Residues 119–139 (SEDSESEEPADQNTLGASPGE) are disordered.

This sequence belongs to the vasopressin/oxytocin family.

The protein localises to the secreted. Functionally, vasotocin is an antidiuretic hormone. In Catostomus commersonii (White sucker), this protein is Vasotocin-neurophysin VT 2.